The primary structure comprises 342 residues: MKLWKTASRFLPLSFLTLFLTGCLGEENLTALDPKGPQAQWIYDNMILSIIVMALVSIVVFAIFFIILAKYRRKPGDDEIPKQVHGNTALEITWTVIPIILLVILAVPTITGTFMFADKDPDPEVGDNTVYIKVTGHQFWWQFDYENEGFTAGQDVYIPVGEKVIFELHAQDVLHSFWVPALGGKIDTVPGITNHMWLEADEPGVFKGKCAELCGPSHALMDFKLIALERDEYDAWVEGMSAEVEEPTETLANQGRQVFEENSCIGCHAVGGTGTAAGPAFTNFGEREVIAGYLENNDENLEAWIRDPQSLKQGNVMPAYPDMSEEDMEALIAYLRSLKVME.

Positions methionine 1 to glycine 22 are cleaved as a signal peptide. Cysteine 23 carries N-palmitoyl cysteine lipidation. The S-diacylglycerol cysteine moiety is linked to residue cysteine 23. Residues cysteine 23–isoleucine 50 are Extracellular-facing. Residues cysteine 23–glutamate 249 form a cytochrome c oxidase subunit II region. The helical transmembrane segment at isoleucine 51–alanine 69 threads the bilayer. The Cytoplasmic segment spans residues lysine 70–alanine 89. Residues leucine 90 to proline 108 form a helical membrane-spanning segment. At threonine 109–glutamate 342 the chain is on the extracellular side. Positions 175, 210, 214, and 218 each coordinate Cu cation. The region spanning threonine 250–glutamate 342 is the Cytochrome c domain. Residues cysteine 264, cysteine 267, histidine 268, and methionine 317 each coordinate heme c.

The protein belongs to the cytochrome c oxidase subunit 2 family. Cu cation is required as a cofactor. It depends on heme c as a cofactor.

The protein localises to the cell membrane. The catalysed reaction is 4 Fe(II)-[cytochrome c] + O2 + 8 H(+)(in) = 4 Fe(III)-[cytochrome c] + 2 H2O + 4 H(+)(out). Its function is as follows. Subunits I and II form the functional core of the enzyme complex. Electrons originating in cytochrome c are transferred via heme a and Cu(A) to the binuclear center formed by heme a3 and Cu(B). This is Cytochrome c oxidase subunit 2 (ctaC) from Alkalihalophilus pseudofirmus (strain ATCC BAA-2126 / JCM 17055 / OF4) (Bacillus pseudofirmus).